Reading from the N-terminus, the 35-residue chain is Pheromone-binding protein 1 (35 aa).

This sequence belongs to the PBP/GOBP family. In terms of assembly, homodimer. Antenna.

In terms of biological role, this major soluble protein in olfactory sensilla of male moths might serve to solubilize the extremely hydrophobic pheromone molecules and to transport pheromone through the aqueous lymph to receptors located on olfactory cilia. The chain is Pheromone-binding protein 1 from Lymantria dispar (Gypsy moth).